Here is a 1044-residue protein sequence, read N- to C-terminus: DEMETER-like protein 3 (1044 aa).

The segment covering 1–15 has biased composition (polar residues); it reads MLTDGSQHTYQNGET. Residues 1–107 form a disordered region; the sequence is MLTDGSQHTY…KPRNPATTRL (107 aa). The span at 16 to 30 shows a compositional bias: basic and acidic residues; it reads KNSKEHERKCDESAH. Residues 38–53 show a composition bias toward basic residues; the sequence is THKKKEKKNSKEKHGI. Residues 54-66 show a composition bias toward basic and acidic residues; sequence KHSESEHLQDDIS. Residues 71-89 are compositionally biased toward basic residues; the sequence is GKGRRRNSKGTPKKLRFNR. The DEMETER stretch occupies residues 348–445; the sequence is KVNLDPETIK…AFMSVAAKFP (98 aa). [4Fe-4S] cluster-binding residues include Cys-678, Cys-685, Cys-688, and Cys-694. The disordered stretch occupies residues 1024 to 1044; it reads VRRLHTPPDERGPKFMSDDDI.

The protein belongs to the DNA glycosylase family. DEMETER subfamily. Requires [4Fe-4S] cluster as cofactor.

It localises to the nucleus. Functionally, potential transcriptional activator that may act by nicking the target promoter. Catalyzes the release of 5-methylcytosine (5-meC) from DNA by a glycosylase/lyase mechanism. The sequence is that of DEMETER-like protein 3 (DML3) from Arabidopsis thaliana (Mouse-ear cress).